Reading from the N-terminus, the 396-residue chain is Seminal vesicle major clotting proteins (396 aa).

The signal sequence occupies residues 1–21 (MKSTIFFILSLLLMLENQAAG). The disordered stretch occupies residues 45-178 (MEEAVSGSGL…ASSVDHRKKG (134 aa)). The segment covering 60–152 (RGSDREESVG…RVSVRHERVE (93 aa)) has biased composition (basic and acidic residues). SVP-3/-4 repeat repeat units follow at residues 65-88 (EESVGERVSLRQEEFEKGHIRSSV), 89-112 (EEPEGEHVSVRREHLEKSHIRHNV), and 113-136 (EEPEGERVSVRREHLEKSHIRHSA). The SVP-3/-4 repeat; truncated repeat unit spans residues 137–157 (EEPEGERVSVRHERVEKTHKR). A propeptide spanning residues 177 to 192 (KGHIRFKRQDPIAALA) is cleaved from the precursor. SVP-1 clotting repeat units follow at residues 194 to 217 (IEGQDAVKDSLWVKGQASSEERFS), 218 to 241 (VKGQDLVKGHLQMKGQSSLAERFS), 242 to 265 (VTGQDSVKGRLQMKGQDTLAERFS), 266 to 289 (MTGQDSVKSRLQMKGQDSLSERFS), 290 to 313 (MTGQDSVKGRLQMKGQSSLAERFS), 314 to 337 (VTGQDSVKGRLQMKGKDTLAERFS), 338 to 361 (VTGQDSVKGRLQMKGHDLLEERFS), and 362 to 385 (VSGQDSVKGLARIKGQESVQSGFS). Residues 194-396 (IEGQDAVKDS…KGQGSLKGLI (203 aa)) are 9 X tandem repeats of SVP-1 like motif. The interval 377–396 (QESVQSGFSVKGQGSLKGLI) is disordered. The stretch at 386 to 396 (VKGQGSLKGLI) is one SVP-1 clotting 9; truncated repeat.

It to the SVP-2 precursor, particularly in regions where protein processing must occur. In terms of processing, SVP-3 may be a post-translationally modified form of SVP-4. Post-translationally, covalent clotting of SVP-1 is catalyzed by a transglutaminase secreted by the anterior prostate through the formation of gamma-glutamyl-epsilon-lysine cross-links. The conserved 2 Lys and 1 Gln residues per functional unit seem to be the residues involved in the formation of those cross-links.

It localises to the secreted. SVP-1 serves as substrate in the formation of the copulatory plug. SVP-3 and SVP-4 may also contribute to the clot. This is Seminal vesicle major clotting proteins from Cavia porcellus (Guinea pig).